Reading from the N-terminus, the 196-residue chain is Translation initiation factor IF-3 (196 aa).

The protein belongs to the IF-3 family. As to quaternary structure, monomer.

Its subcellular location is the cytoplasm. Functionally, IF-3 binds to the 30S ribosomal subunit and shifts the equilibrium between 70S ribosomes and their 50S and 30S subunits in favor of the free subunits, thus enhancing the availability of 30S subunits on which protein synthesis initiation begins. The chain is Translation initiation factor IF-3 from Wigglesworthia glossinidia brevipalpis.